The sequence spans 211 residues: V-type ATP synthase subunit D (211 aa).

This sequence belongs to the V-ATPase D subunit family.

Functionally, produces ATP from ADP in the presence of a proton gradient across the membrane. This is V-type ATP synthase subunit D from Fusobacterium nucleatum subsp. nucleatum (strain ATCC 25586 / DSM 15643 / BCRC 10681 / CIP 101130 / JCM 8532 / KCTC 2640 / LMG 13131 / VPI 4355).